The chain runs to 65 residues: MAVQKSRKTPSKRGMRRSHNALVKSTLSEDQETGEIHLRHHITTDGFYHGKKIINKVQNIQKINA.

Over residues 1 to 19 (MAVQKSRKTPSKRGMRRSH) the composition is skewed to basic residues. Residues 1–32 (MAVQKSRKTPSKRGMRRSHNALVKSTLSEDQE) are disordered.

The protein belongs to the bacterial ribosomal protein bL32 family.

This is Large ribosomal subunit protein bL32 from Vesicomyosocius okutanii subsp. Calyptogena okutanii (strain HA).